The sequence spans 157 residues: SsrA-binding protein (157 aa).

Positions 133 to 157 (LHDKRETEKKRDWSREKGRLLRARG) are disordered. The segment covering 135–151 (DKRETEKKRDWSREKGR) has biased composition (basic and acidic residues).

The protein belongs to the SmpB family.

Its subcellular location is the cytoplasm. Functionally, required for rescue of stalled ribosomes mediated by trans-translation. Binds to transfer-messenger RNA (tmRNA), required for stable association of tmRNA with ribosomes. tmRNA and SmpB together mimic tRNA shape, replacing the anticodon stem-loop with SmpB. tmRNA is encoded by the ssrA gene; the 2 termini fold to resemble tRNA(Ala) and it encodes a 'tag peptide', a short internal open reading frame. During trans-translation Ala-aminoacylated tmRNA acts like a tRNA, entering the A-site of stalled ribosomes, displacing the stalled mRNA. The ribosome then switches to translate the ORF on the tmRNA; the nascent peptide is terminated with the 'tag peptide' encoded by the tmRNA and targeted for degradation. The ribosome is freed to recommence translation, which seems to be the essential function of trans-translation. This chain is SsrA-binding protein, found in Bradyrhizobium diazoefficiens (strain JCM 10833 / BCRC 13528 / IAM 13628 / NBRC 14792 / USDA 110).